The following is a 124-amino-acid chain: Small ribosomal subunit protein bS6 (124 aa).

Residues 99–124 are disordered; sequence PLPAPRIVPGSEPEPVQQQEAAAVEA. The segment covering 111-124 has biased composition (low complexity); it reads PEPVQQQEAAAVEA.

It belongs to the bacterial ribosomal protein bS6 family.

Binds together with bS18 to 16S ribosomal RNA. The protein is Small ribosomal subunit protein bS6 of Prochlorococcus marinus (strain MIT 9313).